The following is a 462-amino-acid chain: Cysteine--tRNA ligase (462 aa).

C28 contributes to the Zn(2+) binding site. The 'HIGH' region signature appears at 30–40 (MTVYDYCHLGH). The Zn(2+) site is built by C209, H234, and E238. The short motif at 266 to 270 (KMAKS) is the 'KMSKS' region element. ATP is bound at residue K269.

Belongs to the class-I aminoacyl-tRNA synthetase family. In terms of assembly, monomer. Zn(2+) is required as a cofactor.

It is found in the cytoplasm. The catalysed reaction is tRNA(Cys) + L-cysteine + ATP = L-cysteinyl-tRNA(Cys) + AMP + diphosphate. In Alkalilimnicola ehrlichii (strain ATCC BAA-1101 / DSM 17681 / MLHE-1), this protein is Cysteine--tRNA ligase.